The following is a 28-amino-acid chain: TNSKEGEFIAEGGGVRGPRIVERXQSAC.

S3 is subject to Phosphoserine.

As to quaternary structure, heterohexamer; disulfide linked. Contains 2 sets of 3 non-identical chains (alpha, beta and gamma). The 2 heterotrimers are in head to head conformation with the N-termini in a small central domain. In terms of processing, conversion of fibrinogen to fibrin is triggered by thrombin, which cleaves fibrinopeptides A and B from alpha and beta chains, and thus exposes the N-terminal polymerization sites responsible for the formation of the soft clot. The soft clot is converted into the hard clot by factor XIIIA which catalyzes the epsilon-(gamma-glutamyl)lysine cross-linking between gamma chains (stronger) and between alpha chains (weaker) of different monomers. Forms F13A-mediated cross-links between a glutamine and the epsilon-amino group of a lysine residue, forming fibronectin-fibrinogen heteropolymers.

The protein resides in the secreted. In terms of biological role, cleaved by the protease thrombin to yield monomers which, together with fibrinogen beta (FGB) and fibrinogen gamma (FGG), polymerize to form an insoluble fibrin matrix. Fibrin has a major function in hemostasis as one of the primary components of blood clots. In addition, functions during the early stages of wound repair to stabilize the lesion and guide cell migration during re-epithelialization. Was originally thought to be essential for platelet aggregation, based on in vitro studies using anticoagulated blood. However, subsequent studies have shown that it is not absolutely required for thrombus formation in vivo. Enhances expression of SELP in activated platelets via an ITGB3-dependent pathway. Maternal fibrinogen is essential for successful pregnancy. Fibrin deposition is also associated with infection, where it protects against IFNG-mediated hemorrhage. May also facilitate the immune response via both innate and T-cell mediated pathways. The polypeptide is Fibrinogen alpha chain (FGA) (Canis lupus familiaris (Dog)).